The sequence spans 511 residues: 2-isopropylmalate synthase (511 aa).

Residues 5-267 (LFIFDTTLRD…DTRIDATQIV (263 aa)) enclose the Pyruvate carboxyltransferase domain. Mn(2+)-binding residues include Asp14, His202, His204, and Asn238. Positions 393 to 511 (KLLSMKVCSE…SKRERAHPQV (119 aa)) are regulatory domain.

This sequence belongs to the alpha-IPM synthase/homocitrate synthase family. LeuA type 1 subfamily. As to quaternary structure, homodimer. Requires Mn(2+) as cofactor.

The protein resides in the cytoplasm. It carries out the reaction 3-methyl-2-oxobutanoate + acetyl-CoA + H2O = (2S)-2-isopropylmalate + CoA + H(+). The protein operates within amino-acid biosynthesis; L-leucine biosynthesis; L-leucine from 3-methyl-2-oxobutanoate: step 1/4. Its function is as follows. Catalyzes the condensation of the acetyl group of acetyl-CoA with 3-methyl-2-oxobutanoate (2-ketoisovalerate) to form 3-carboxy-3-hydroxy-4-methylpentanoate (2-isopropylmalate). This is 2-isopropylmalate synthase from Thiobacillus denitrificans (strain ATCC 25259 / T1).